Reading from the N-terminus, the 169-residue chain is E1B protein, small T-antigen (169 aa).

Belongs to the adenoviridae E1B 19 kDa protein family.

The sequence is that of E1B protein, small T-antigen from Canine adenovirus serotype 1 (strain CLL) (CAdV-1).